The sequence spans 633 residues: MPRINFIFGVHNHQPLGNFEWIIKRAYEKAYRPFLETLEEYPNMKVAVHISGVLVEWLERNRPEYIDLLKSLIKKGQVELVVAGFYEPILVAIPEEDRVEQIKLSKGWARKMGYEARGLWLTERVWEPELVKTLREAGIEYVILDDYHFMSAGLSKEELFWPYYTENGGEAIVVFPIDEKLRYLIPFRPVNETLEYLHSLADEDESKVAVFHDDGEKFGAWPGTHELVYERGWLKEFFDRISSDDKINLMLYSEYLSKFRPKGLVYLPIASYFEMSEWSLPARQAKLFFEFIKKLKELNLFEKYRIFVRGGIWKNFLYKYPEGNYMHKRMLMLSKLLRNNPTARIFVLRAQCNDAYWHGVFGGIYLPHIRRAVWRNLIKAHSYLEPENRVFDLDFDGGEEIMLENENFILVVKPHYGGAIFEMSSKKKYVNYLDVVARRWEHYHSLKDIPEGMKRELSYDKWPRGMLQDHFLLPTEVLDNYMLSKYRELGDFLMSSYHYQIEDKLRLWRSGKVKGISVEVEKVLRLNKDGFTTEYRIVSKEELGLMFGVEINLAVQGTVEYPAEFMSKEIEVKDIFGKVKIESEKEAKIWKFPIKTLSQSESGWDFVQQGVSYTFLYPIEKMLNIKLKFKESM.

Glu-123 acts as the Nucleophile in catalysis. Asp-214 acts as the Proton donor in catalysis.

Belongs to the glycosyl hydrolase 57 family.

The catalysed reaction is Endohydrolysis of (1-&gt;4)-alpha-D-glucosidic linkages in polysaccharides containing three or more (1-&gt;4)-alpha-linked D-glucose units.. This is Alpha-amylase (amyA) from Pyrococcus horikoshii (strain ATCC 700860 / DSM 12428 / JCM 9974 / NBRC 100139 / OT-3).